We begin with the raw amino-acid sequence, 195 residues long: dTTP/UTP pyrophosphatase (195 aa).

Asp-70 functions as the Proton acceptor in the catalytic mechanism.

This sequence belongs to the Maf family. YhdE subfamily. The cofactor is a divalent metal cation.

It localises to the cytoplasm. It carries out the reaction dTTP + H2O = dTMP + diphosphate + H(+). It catalyses the reaction UTP + H2O = UMP + diphosphate + H(+). Nucleoside triphosphate pyrophosphatase that hydrolyzes dTTP and UTP. May have a dual role in cell division arrest and in preventing the incorporation of modified nucleotides into cellular nucleic acids. The chain is dTTP/UTP pyrophosphatase from Photorhabdus laumondii subsp. laumondii (strain DSM 15139 / CIP 105565 / TT01) (Photorhabdus luminescens subsp. laumondii).